Here is a 550-residue protein sequence, read N- to C-terminus: T-complex protein 1 subunit eta (550 aa).

The disordered stretch occupies residues 529 to 550 (SESANAGMMPPQGAGRGRGMPM).

It belongs to the TCP-1 chaperonin family. In terms of assembly, heterooligomeric complex of about 850 to 900 kDa that forms two stacked rings, 12 to 16 nm in diameter.

The protein localises to the cytoplasm. Its function is as follows. Molecular chaperone; assists the folding of proteins upon ATP hydrolysis. Known to play a role, in vitro, in the folding of actin and tubulin. In yeast may play a role in mitotic spindle formation. The polypeptide is T-complex protein 1 subunit eta (CCT7) (Saccharomyces cerevisiae (strain ATCC 204508 / S288c) (Baker's yeast)).